The following is a 344-amino-acid chain: S-adenosylmethionine:tRNA ribosyltransferase-isomerase (344 aa).

Belongs to the QueA family. Monomer.

The protein localises to the cytoplasm. It catalyses the reaction 7-aminomethyl-7-carbaguanosine(34) in tRNA + S-adenosyl-L-methionine = epoxyqueuosine(34) in tRNA + adenine + L-methionine + 2 H(+). The protein operates within tRNA modification; tRNA-queuosine biosynthesis. Transfers and isomerizes the ribose moiety from AdoMet to the 7-aminomethyl group of 7-deazaguanine (preQ1-tRNA) to give epoxyqueuosine (oQ-tRNA). The sequence is that of S-adenosylmethionine:tRNA ribosyltransferase-isomerase from Rhizorhabdus wittichii (strain DSM 6014 / CCUG 31198 / JCM 15750 / NBRC 105917 / EY 4224 / RW1) (Sphingomonas wittichii).